We begin with the raw amino-acid sequence, 327 residues long: tRNA(Ile)-lysidine synthase (327 aa).

Residue 32-37 (SGGQDS) participates in ATP binding.

It belongs to the tRNA(Ile)-lysidine synthase family.

Its subcellular location is the cytoplasm. It carries out the reaction cytidine(34) in tRNA(Ile2) + L-lysine + ATP = lysidine(34) in tRNA(Ile2) + AMP + diphosphate + H(+). Functionally, ligates lysine onto the cytidine present at position 34 of the AUA codon-specific tRNA(Ile) that contains the anticodon CAU, in an ATP-dependent manner. Cytidine is converted to lysidine, thus changing the amino acid specificity of the tRNA from methionine to isoleucine. This is tRNA(Ile)-lysidine synthase from Synechococcus sp. (strain JA-2-3B'a(2-13)) (Cyanobacteria bacterium Yellowstone B-Prime).